The sequence spans 218 residues: E3 ubiquitin-protein ligase MARCHF3 (218 aa).

The RING-CH-type zinc finger occupies 63–123 (SPFNDRPMCR…ELCHFRFAVE (61 aa)). Zn(2+)-binding residues include cysteine 71, cysteine 74, cysteine 87, cysteine 89, histidine 97, cysteine 100, cysteine 113, and cysteine 116. 2 helical membrane passes run 145–165 (LFGD…SGWL) and 180–200 (LEAV…LFWT).

As to quaternary structure, interacts with MARCHF2 and STX6.

It localises to the cytoplasmic vesicle membrane. Its subcellular location is the early endosome membrane. It carries out the reaction S-ubiquitinyl-[E2 ubiquitin-conjugating enzyme]-L-cysteine + [acceptor protein]-L-lysine = [E2 ubiquitin-conjugating enzyme]-L-cysteine + N(6)-ubiquitinyl-[acceptor protein]-L-lysine.. The protein operates within protein modification; protein ubiquitination. E3 ubiquitin-protein ligase which may be involved in endosomal trafficking. E3 ubiquitin ligases accept ubiquitin from an E2 ubiquitin-conjugating enzyme in the form of a thioester and then directly transfer the ubiquitin to targeted substrates. The protein is E3 ubiquitin-protein ligase MARCHF3 (Marchf3) of Mus musculus (Mouse).